The chain runs to 737 residues: Catalase-peroxidase (737 aa).

The disordered stretch occupies residues Met1–Lys32. A compositionally biased stretch (polar residues) spans Gly20–Lys32. A cross-link (tryptophyl-tyrosyl-methioninium (Trp-Tyr) (with M-252)) is located at residues Trp103–Tyr226. The active-site Proton acceptor is His104. The tryptophyl-tyrosyl-methioninium (Tyr-Met) (with W-103) cross-link spans Tyr226–Met252. A heme b-binding site is contributed by His267.

Belongs to the peroxidase family. Peroxidase/catalase subfamily. Homodimer or homotetramer. Heme b is required as a cofactor. Post-translationally, formation of the three residue Trp-Tyr-Met cross-link is important for the catalase, but not the peroxidase activity of the enzyme.

It catalyses the reaction H2O2 + AH2 = A + 2 H2O. The catalysed reaction is 2 H2O2 = O2 + 2 H2O. In terms of biological role, bifunctional enzyme with both catalase and broad-spectrum peroxidase activity. This is Catalase-peroxidase from Marinomonas sp. (strain MWYL1).